The sequence spans 197 residues: Phospholipid hydroperoxide glutathione peroxidase (197 aa).

Position 40 is a phosphoserine (serine 40). The active site involves selenocysteine 73. Selenocysteine 73 is a non-standard amino acid (selenocysteine).

It belongs to the glutathione peroxidase family. Monomer. Has a tendency to form higher mass oligomers. Interacts with FUNDC1; this interaction promotes GPX4 recruitment into mitochondria through TOM/TIM complex where it is degraded by mitophagy. As to expression, expressed in testis. Also expressed in liver, lung, kidney and spinal cord.

The protein resides in the mitochondrion. It localises to the cytoplasm. It catalyses the reaction a hydroperoxy polyunsaturated fatty acid + 2 glutathione = a hydroxy polyunsaturated fatty acid + glutathione disulfide + H2O. The catalysed reaction is 2 glutathione + H2O2 = glutathione disulfide + 2 H2O. The enzyme catalyses tert-butyl hydroperoxide + 2 glutathione = tert-butanol + glutathione disulfide + H2O. It carries out the reaction cumene hydroperoxide + 2 glutathione = 2-phenylpropan-2-ol + glutathione disulfide + H2O. It catalyses the reaction (9S)-hydroperoxy-(10E,12Z)-octadecadienoate + 2 glutathione = (9S)-hydroxy-(10E,12Z)-octadecadienoate + glutathione disulfide + H2O. The catalysed reaction is (13S)-hydroperoxy-(9Z,11E)-octadecadienoate + 2 glutathione = (13S)-hydroxy-(9Z,11E)-octadecadienoate + glutathione disulfide + H2O. The enzyme catalyses (5S)-hydroperoxy-(6E,8Z,11Z,14Z)-eicosatetraenoate + 2 glutathione = (5S)-hydroxy-(6E,8Z,11Z,14Z)-eicosatetraenoate + glutathione disulfide + H2O. It carries out the reaction (12R)-hydroperoxy-(5Z,8Z,10E,14Z)-eicosatetraenoate + 2 glutathione = (12R)-hydroxy-(5Z,8Z,10E,14Z)-eicosatetraenoate + glutathione disulfide + H2O. It catalyses the reaction (12S)-hydroperoxy-(5Z,8Z,10E,14Z)-eicosatetraenoate + 2 glutathione = (12S)-hydroxy-(5Z,8Z,10E,14Z)-eicosatetraenoate + glutathione disulfide + H2O. The catalysed reaction is (15S)-hydroperoxy-(5Z,8Z,11Z,13E)-eicosatetraenoate + 2 glutathione = (15S)-hydroxy-(5Z,8Z,11Z,13E)-eicosatetraenoate + glutathione disulfide + H2O. The enzyme catalyses (5S)-hydroperoxy-(6E,8Z,11Z,14Z,17Z)-eicosapentaenoate + 2 glutathione = (5S)-hydroxy-(6E,8Z,11Z,14Z,17Z)-eicosapentaenoate + glutathione disulfide + H2O. It carries out the reaction (12S)-hydroperoxy-(5Z,8Z,10E,14Z,17Z)-eicosapentaenoate + 2 glutathione = (12S)-hydroxy-(5Z,8Z,10E,14Z,17Z)-eicosapentaenoate + glutathione disulfide + H2O. It catalyses the reaction (15S)-hydroperoxy-(5Z,8Z,11Z,13E,17Z)-eicosapentaenoate + 2 glutathione = (15S)-hydroxy-(5Z,8Z,11Z,13E,17Z)-eicosapentaenoate + glutathione disulfide + H2O. The catalysed reaction is (15S)-hydroperoxy-(11Z,13E)-eicosadienoate + 2 glutathione = (15S)-hydroxy-(11Z,13E)-eicosadienoate + glutathione disulfide + H2O. The enzyme catalyses (17S)-hydroperoxy-(4Z,7Z,10Z,13Z,15E,19Z)-docosahexaenoate + 2 glutathione = (17S)-hydroxy-(4Z,7Z,10Z,13Z,15E,19Z)-docosahexaenoate + glutathione disulfide + H2O. It carries out the reaction a hydroperoxy-1,2-diacyl-glycero-3-phosphocholine + 2 glutathione = a hydroxy-1,2-diacyl-glycero-3-phosphocholine + glutathione disulfide + H2O. Functionally, essential antioxidant peroxidase that directly reduces phospholipid hydroperoxide even if they are incorporated in membranes and lipoproteins. Can also reduce fatty acid hydroperoxide, cholesterol hydroperoxide and thymine hydroperoxide. Plays a key role in protecting cells from oxidative damage by preventing membrane lipid peroxidation. Required to prevent cells from ferroptosis, a non-apoptotic cell death resulting from an iron-dependent accumulation of lipid reactive oxygen species. The presence of selenocysteine (Sec) versus Cys at the active site is essential for life: it provides resistance to overoxidation and prevents cells against ferroptosis. The presence of Sec at the active site is also essential for the survival of a specific type of parvalbumin-positive interneurons, thereby preventing against fatal epileptic seizures. May be required to protect cells from the toxicity of ingested lipid hydroperoxides. Required for normal sperm development and male fertility. Essential for maturation and survival of photoreceptor cells. Plays a role in a primary T-cell response to viral and parasitic infection by protecting T-cells from ferroptosis and by supporting T-cell expansion. Plays a role of glutathione peroxidase in platelets in the arachidonic acid metabolism. Reduces hydroperoxy ester lipids formed by a 15-lipoxygenase that may play a role as down-regulator of the cellular 15-lipoxygenase pathway. Can also reduce small soluble hydroperoxides such as H2O2, cumene hydroperoxide and tert-butyl hydroperoxide. The polypeptide is Phospholipid hydroperoxide glutathione peroxidase (Callithrix jacchus (White-tufted-ear marmoset)).